The chain runs to 218 residues: Probable transaldolase 2 (218 aa).

The Schiff-base intermediate with substrate role is filled by lysine 83.

Belongs to the transaldolase family. Type 3B subfamily.

The protein resides in the cytoplasm. It carries out the reaction D-sedoheptulose 7-phosphate + D-glyceraldehyde 3-phosphate = D-erythrose 4-phosphate + beta-D-fructose 6-phosphate. The protein operates within carbohydrate degradation; pentose phosphate pathway; D-glyceraldehyde 3-phosphate and beta-D-fructose 6-phosphate from D-ribose 5-phosphate and D-xylulose 5-phosphate (non-oxidative stage): step 2/3. Functionally, transaldolase is important for the balance of metabolites in the pentose-phosphate pathway. In Listeria innocua serovar 6a (strain ATCC BAA-680 / CLIP 11262), this protein is Probable transaldolase 2.